Reading from the N-terminus, the 150-residue chain is Deoxyuridine 5'-triphosphate nucleotidohydrolase (150 aa).

Substrate contacts are provided by residues 69–71 (RSG), Asn-82, and 86–88 (LID).

Belongs to the dUTPase family. Mg(2+) serves as cofactor.

It catalyses the reaction dUTP + H2O = dUMP + diphosphate + H(+). It functions in the pathway pyrimidine metabolism; dUMP biosynthesis; dUMP from dCTP (dUTP route): step 2/2. Its function is as follows. This enzyme is involved in nucleotide metabolism: it produces dUMP, the immediate precursor of thymidine nucleotides and it decreases the intracellular concentration of dUTP so that uracil cannot be incorporated into DNA. In Methylobacillus flagellatus (strain ATCC 51484 / DSM 6875 / VKM B-1610 / KT), this protein is Deoxyuridine 5'-triphosphate nucleotidohydrolase.